The following is a 466-amino-acid chain: Nuclear pore complex protein Nup50 (466 aa).

A compositionally biased stretch (basic and acidic residues) spans 1–14 (MAKRVAEKELTDRN). Positions 1 to 22 (MAKRVAEKELTDRNWDEEDEVE) are disordered. An N6-acetyllysine modification is found at Lys8. Position 52 is a phosphoserine (Ser52). Copy 1 of the repeat occupies 76–77 (FG). The segment at 76-302 (FGGSGGKPLE…FSAGSSSLFG (227 aa)) is 5 X 2 AA repeats of F-G. N6-acetyllysine is present on Lys82. Copy 2 of the repeat occupies 112–113 (FG). Position 126 is an N6-acetyllysine (Lys126). Disordered stretches follow at residues 128–150 (ISSPKCNNSNQPPSSGPASSTAC) and 200–257 (LENG…AEKK). Positions 131-150 (PKCNNSNQPPSSGPASSTAC) are enriched in polar residues. Positions 143–205 (GPASSTACPG…IEKQLENGGG (63 aa)) are binding to CDKN1B. At Ser208 the chain carries Phosphoserine. The stretch at 225–226 (FG) is repeat 3. A compositionally biased stretch (polar residues) spans 225–235 (FGSTKLQQESP). Ser234 carries the post-translational modification Phosphoserine. The segment covering 241-257 (NKAEDTSEKVEFTAEKK) has biased composition (basic and acidic residues). Thr246 carries the post-translational modification Phosphothreonine. The residue at position 268 (Ser268) is a Phosphoserine. Repeat unit 4 spans residues 271 to 272 (FG). The residue at position 294 (Ser294) is a Phosphoserine. The stretch at 301 to 302 (FG) is repeat 5. The disordered stretch occupies residues 316-343 (SAKASESPAGGGSSECRDGEEEENDEPP). The RanBD1 domain occupies 333–466 (DGEEEENDEP…HKILLEKKDA (134 aa)). Lys351 participates in a covalent cross-link: Glycyl lysine isopeptide (Lys-Gly) (interchain with G-Cter in SUMO2). N6-acetyllysine is present on Lys448.

As to quaternary structure, does not interact with TPR. Interacts with Importin alpha-2, Importin beta, Importin beta-2, NUP153, Ran binding protein 7, CDKN1B and itself. In terms of tissue distribution, widely expressed at low levels. Highest in the developing neural tube and adult testes.

The protein localises to the nucleus. It is found in the nuclear pore complex. It localises to the nucleus membrane. In terms of biological role, component of the nuclear pore complex that has a direct role in nuclear protein import. Actively displaces NLSs from importin-alpha, and facilitates disassembly of the importin-alpha:beta-cargo complex and importin recycling. Interacts with regulatory proteins of cell cycle progression including CDKN1B. This interaction is required for correct intracellular transport and degradation of CDKN1B. This Mus musculus (Mouse) protein is Nuclear pore complex protein Nup50 (Nup50).